A 160-amino-acid polypeptide reads, in one-letter code: Growth arrest and DNA damage-inducible protein GADD45 beta (160 aa).

It belongs to the GADD45 family. As to quaternary structure, interacts with GADD45GIP1.

In terms of biological role, involved in the regulation of growth and apoptosis. Mediates activation of stress-responsive MTK1/MEKK4 MAPKKK. The sequence is that of Growth arrest and DNA damage-inducible protein GADD45 beta (GADD45B) from Bos taurus (Bovine).